The chain runs to 147 residues: Cyanate hydratase (147 aa).

Residues Arg-88, Glu-91, and Ser-114 contribute to the active site.

The protein belongs to the cyanase family.

The catalysed reaction is cyanate + hydrogencarbonate + 3 H(+) = NH4(+) + 2 CO2. Catalyzes the reaction of cyanate with bicarbonate to produce ammonia and carbon dioxide. The polypeptide is Cyanate hydratase (Polynucleobacter asymbioticus (strain DSM 18221 / CIP 109841 / QLW-P1DMWA-1) (Polynucleobacter necessarius subsp. asymbioticus)).